The chain runs to 476 residues: Arginine biosynthesis bifunctional protein ArgJ, mitochondrial (476 aa).

6 residues coordinate substrate: T193, K219, T237, E337, N471, and S476. The active-site Nucleophile is the T237.

It belongs to the ArgJ family. As to quaternary structure, heterodimer of an alpha and a beta chain. In terms of processing, the alpha and beta chains are autoproteolytically processed from a single precursor protein within the mitochondrion.

The protein resides in the mitochondrion matrix. The enzyme catalyses N(2)-acetyl-L-ornithine + L-glutamate = N-acetyl-L-glutamate + L-ornithine. It catalyses the reaction L-glutamate + acetyl-CoA = N-acetyl-L-glutamate + CoA + H(+). Its pathway is amino-acid biosynthesis; L-arginine biosynthesis; L-ornithine and N-acetyl-L-glutamate from L-glutamate and N(2)-acetyl-L-ornithine (cyclic): step 1/1. The protein operates within amino-acid biosynthesis; L-arginine biosynthesis; N(2)-acetyl-L-ornithine from L-glutamate: step 1/4. Catalyzes two activities which are involved in the cyclic version of arginine biosynthesis: the synthesis of acetylglutamate from glutamate and acetyl-CoA, and of ornithine by transacetylation between acetylornithine and glutamate. This chain is Arginine biosynthesis bifunctional protein ArgJ, mitochondrial, found in Cryptococcus neoformans var. neoformans serotype D (strain JEC21 / ATCC MYA-565) (Filobasidiella neoformans).